The primary structure comprises 977 residues: Structural protein ORF43 (977 aa).

A disordered region spans residues 531–556; that stretch reads DNDNINKQQQQQRERNDDDDDDDDST.

It belongs to the ascovirus HvAV ORF146 family.

The protein resides in the virion. This is Structural protein ORF43 from Noctuidae (owlet moths).